Consider the following 109-residue polypeptide: Thioredoxin-like protein slr1139 (109 aa).

The Thioredoxin domain maps to 2 to 107 (SLLEITDAEF…LLELLKEELD (106 aa)). An intrachain disulfide couples Cys31 to Cys34.

Belongs to the thioredoxin family.

In Synechocystis sp. (strain ATCC 27184 / PCC 6803 / Kazusa), this protein is Thioredoxin-like protein slr1139.